Reading from the N-terminus, the 263-residue chain is Pollen allergen Phl p 1 (263 aa).

Residues 1–23 (MASSSSVLLVVVLFAVFLGSAYG) form the signal peptide. A glycan (N-linked (GlcNAc...) asparagine) is linked at Asn-32. The region spanning 61–167 (GGACGYKDVD…RRVKCKYPEG (107 aa)) is the Expansin-like EG45 domain. Disulfide bonds link Cys-64-Cys-92, Cys-95-Cys-162, and Cys-100-Cys-106. Positions 181 to 262 (NYLALLVKYV…GWKADTSYES (82 aa)) constitute an Expansin-like CBD domain.

Belongs to the expansin family. Expansin B subfamily. Homodimer.

It localises to the secreted. In Phleum pratense (Common timothy), this protein is Pollen allergen Phl p 1 (PHLPI).